The chain runs to 129 residues: MKTSFNKYGRKDGKDLCEIVLENDHGMIVKVLNYGATLEKVLLNDENMILSLNSPADYSQERNYLGGTVGRIAGRVRKGQWRHGLETHQLPINDGENHIHGGIGTDTEVWDFKPSCSENSARVDLTLLD.

This sequence belongs to the aldose epimerase family.

It catalyses the reaction alpha-D-glucose = beta-D-glucose. It participates in carbohydrate metabolism; hexose metabolism. Functionally, mutarotase converts alpha-aldose to the beta-anomer. It is active on D-glucose, L-arabinose, D-xylose, D-galactose, maltose and lactose. This is Aldose 1-epimerase (galM) from Lactobacillus helveticus (Lactobacillus suntoryeus).